The sequence spans 206 residues: Outer-membrane lipoprotein carrier protein (206 aa).

A signal peptide spans 1–21 (MKKLLCAVLLSPLLYSNAVLA).

It belongs to the LolA family. In terms of assembly, monomer.

Its subcellular location is the periplasm. Its function is as follows. Participates in the translocation of lipoproteins from the inner membrane to the outer membrane. Only forms a complex with a lipoprotein if the residue after the N-terminal Cys is not an aspartate (The Asp acts as a targeting signal to indicate that the lipoprotein should stay in the inner membrane). The polypeptide is Outer-membrane lipoprotein carrier protein (Shewanella oneidensis (strain ATCC 700550 / JCM 31522 / CIP 106686 / LMG 19005 / NCIMB 14063 / MR-1)).